The sequence spans 382 residues: D-galactonate dehydratase (382 aa).

Asp183 contributes to the Mg(2+) binding site. Residue His185 is the Proton donor of the active site. Glu209 and Glu235 together coordinate Mg(2+). His285 (proton acceptor) is an active-site residue. The tract at residues Asn361–Trp382 is disordered.

The protein belongs to the mandelate racemase/muconate lactonizing enzyme family. GalD subfamily. The cofactor is Mg(2+).

The catalysed reaction is D-galactonate = 2-dehydro-3-deoxy-D-galactonate + H2O. The protein operates within carbohydrate acid metabolism; D-galactonate degradation; D-glyceraldehyde 3-phosphate and pyruvate from D-galactonate: step 1/3. Its function is as follows. Catalyzes the dehydration of D-galactonate to 2-keto-3-deoxy-D-galactonate. In Xanthomonas oryzae pv. oryzae (strain MAFF 311018), this protein is D-galactonate dehydratase.